A 231-amino-acid polypeptide reads, in one-letter code: MIHAPIDFKGSNFTLLVIHIYDAPIEVIIQAIQDKITQAPQLLKNAPVILNVASLSPECNWINLLKAILSTGLHVVAVSGCNNSTLKNDIIISGLPLITEGQTLQCSSYTTTPIKSTLSINNKTKLIHTPIRSGQQIYAKNSDLVITNNVSAGAELIADGNIHIYGMMRGRALAGASGDSHCQIFCSYLFPELVSIAGQYWIDDQIPAELLGKAGRIYLHCDALSIQPLIF.

The protein belongs to the MinC family. Interacts with MinD and FtsZ.

In terms of biological role, cell division inhibitor that blocks the formation of polar Z ring septums. Rapidly oscillates between the poles of the cell to destabilize FtsZ filaments that have formed before they mature into polar Z rings. Prevents FtsZ polymerization. The sequence is that of Probable septum site-determining protein MinC from Baumannia cicadellinicola subsp. Homalodisca coagulata.